The primary structure comprises 347 residues: MSESNLKGRKVVLHDMCLRDGMHAKREQISVEQMVKVATALDDAGIPYLQVTHGAGLGGNSLQHGFALASNEEYIAAVASRMKQAKVSVLLIPGLGTMRELQAAYDAGARSVHVATHCTEADTAPQHIAFARKLGMDTTGFLMMSHLNDAAGIAQQGKLMESYGAQTVYVTDSAGYMLPADVTARVRALREVLNPETEIGFHGHHNLGMGIANSIAAIEAGATRIDGSVAGLGAGAGNTPLEVFAAVCERMGIETGVDLFKLMDVAEDVIVPMMDHMVRVDRESLTLGFAGVYSTFLLHAKRAAERFGVPARDILVELGRKKMIGGQEDMIQDTAMTMARERGVSAA.

The Pyruvate carboxyltransferase domain maps to V11–M263. R19–D20 contributes to the substrate binding site. D20 contributes to the Mn(2+) binding site. The active-site Proton acceptor is the H23. Residues S173 and H202 each coordinate substrate. Mn(2+) is bound by residues H202 and H204. Y293 contacts substrate.

It belongs to the 4-hydroxy-2-oxovalerate aldolase family.

It catalyses the reaction (S)-4-hydroxy-2-oxopentanoate = acetaldehyde + pyruvate. The sequence is that of 4-hydroxy-2-oxovalerate aldolase 1 (lapG) from Azoarcus sp. (strain BH72).